The following is a 46-amino-acid chain: uncharacterized protein (46 aa).

The interval 1–46 (MNFGIKPDVSSGPRKGGPFKELSDFSKTSPTPQQPRSLSGKSVMLP) is disordered. The segment covering 25-40 (FSKTSPTPQQPRSLSG) has biased composition (polar residues).

This is an uncharacterized protein from Dictyostelium discoideum (Social amoeba).